A 572-amino-acid chain; its full sequence is MRGPGTAASHSPLGLCALVLALLGALPTDTRAQPYHGEKGISVPDHGFCQPISIPLCTDIAYNQTILPNLLGHTNQEDAGLEVHQFYPLVKVQCSPELRFFLCSMYAPVCTVLDQAIPPCRSLCERARQGCEALMNKFGFQWPERLRCENFPVHGAGEICVGQNTSDGSGGAGGSPTAYPTAPYLPDPPFTAMSPSDGRGRLSFPFSCPRQLKVPPYLGYRFLGERDCGAPCEPGRANGLMYFKEEERRFARLWVGVWSVLCCASTLFTVLTYLVDMRRFSYPERPIIFLSGCYFMVAVAHVAGFLLEDRAVCVERFSDDGYRTVAQGTKKEGCTILFMVLYFFGMASSIWWVILSLTWFLAAGMKWGHEAIEANSQYFHLAAWAVPAVKTITILAMGQVDGDLLSGVCYVGLSSVDALRGFVLAPLFVYLFIGTSFLLAGFVSLFRIRTIMKHDGTKTEKLEKLMVRIGVFSVLYTVPATIVLACYFYEQAFREHWERTWLLQTCKSYAVPCPPGHFSPMSPDFTVFMIKYLMTMIVGITTGFWIWSGKTLQSWRRFYHRLSHSSKGETAV.

Residues 1 to 32 (MRGPGTAASHSPLGLCALVLALLGALPTDTRA) form the signal peptide. The Extracellular segment spans residues 33–254 (QPYHGEKGIS…EEERRFARLW (222 aa)). The FZ domain occupies 44-163 (PDHGFCQPIS…HGAGEICVGQ (120 aa)). 5 disulfides stabilise this stretch: Cys-49-Cys-110, Cys-57-Cys-103, Cys-94-Cys-131, Cys-120-Cys-160, and Cys-124-Cys-148. Residue Asn-63 is glycosylated (N-linked (GlcNAc...) asparagine). Asn-164 carries an N-linked (GlcNAc...) asparagine glycan. Residues 255–275 (VGVWSVLCCASTLFTVLTYLV) form a helical membrane-spanning segment. The Cytoplasmic portion of the chain corresponds to 276–286 (DMRRFSYPERP). Residues 287–307 (IIFLSGCYFMVAVAHVAGFLL) form a helical membrane-spanning segment. Residues 308–334 (EDRAVCVERFSDDGYRTVAQGTKKEGC) are Extracellular-facing. Residues 335-355 (TILFMVLYFFGMASSIWWVIL) traverse the membrane as a helical segment. Residues 356 to 377 (SLTWFLAAGMKWGHEAIEANSQ) lie on the Cytoplasmic side of the membrane. The chain crosses the membrane as a helical span at residues 378-398 (YFHLAAWAVPAVKTITILAMG). At 399 to 421 (QVDGDLLSGVCYVGLSSVDALRG) the chain is on the extracellular side. The helical transmembrane segment at 422 to 442 (FVLAPLFVYLFIGTSFLLAGF) threads the bilayer. Topologically, residues 443–468 (VSLFRIRTIMKHDGTKTEKLEKLMVR) are cytoplasmic. The chain crosses the membrane as a helical span at residues 469–489 (IGVFSVLYTVPATIVLACYFY). Over 490–526 (EQAFREHWERTWLLQTCKSYAVPCPPGHFSPMSPDFT) the chain is Extracellular. A helical transmembrane segment spans residues 527–547 (VFMIKYLMTMIVGITTGFWIW). Topologically, residues 548–572 (SGKTLQSWRRFYHRLSHSSKGETAV) are cytoplasmic. The Lys-Thr-X-X-X-Trp motif, mediates interaction with the PDZ domain of Dvl family members motif lies at 550 to 555 (KTLQSW). Positions 570–572 (TAV) match the PDZ-binding motif.

It belongs to the G-protein coupled receptor Fz/Smo family. As to quaternary structure, interacts with MAGI3. Interacts with DVL1. Interacts with CCDC88C/DAPLE; the interaction displaces DVL1 from FZD7, leading to inhibition of canonical Wnt signaling and triggering of non-canonical Wnt responses. Interacts with MYOC. Binds to SDCBP; this interaction is increased by inositol trisphosphate (IP3). Interacts with glypican GPC3. Post-translationally, ubiquitinated by ZNRF3, leading to its degradation by the proteasome.

It is found in the cell membrane. The protein localises to the endosome membrane. In terms of biological role, receptor for Wnt proteins. Most frizzled receptors are coupled to the beta-catenin canonical signaling pathway, which leads to the activation of disheveled proteins, inhibition of GSK-3 kinase, nuclear accumulation of beta-catenin and activation of Wnt target genes. A second signaling pathway involving PKC and calcium fluxes has been seen for some family members, but it is not yet clear if it represents a distinct pathway or if it can be integrated in the canonical pathway, as PKC seems to be required for Wnt-mediated inactivation of GSK-3 kinase. Both pathways seem to involve interactions with G-proteins. Activation by WNT8 induces expression of beta-catenin target genes. Following ligand activation, binds to CCDC88C/DAPLE which displaces DVL1 from FZD7 and leads to inhibition of canonical Wnt signaling, activation of G-proteins by CCDC88C and triggering of non-canonical Wnt responses. May be involved in transduction and intercellular transmission of polarity information during tissue morphogenesis and/or in differentiated tissues. In Mus musculus (Mouse), this protein is Frizzled-7 (Fzd7).